The primary structure comprises 615 residues: MGASHSTVSDPHRFAVAITGSDDDVRSLQAHPTKSYDYIVVGGGTAGCVLASRLSEDSRVNVLLVEAGYSNHGVTNSIIPLAFPMLMKSKYDWNYETVGMAGINGRTSYWPRGRLLGGTSSINGSMYHRCAPEDFSAWVEEGAKGWEYENMKPYFRKAEGYNPHPDHPNIDPALHGTVGPAKVTHGPIAFLSQPITKDILQSSINVGIRQVHDFNTDVGPTGVGLFARNVFPNGTRVSAATGYLTPSVLARPNLTVAVECMAEKIVLSSDEKVPRAKGLIFSTSRDGQRFYVPASKELILSSGVIGTPQVLMLSGIGPAAELAKHNIPVVRDLPVGEYLQDHFSPGPMLIRAKKGTWDFILRPLGGLLAMVKWFFFGKGPLSSLSVQVACFVRSDDKTFAHPQLPMHDGAKKYQVKDCCSGPTAPDIELFFAPFLAPPLGMKYWPFPGLTSGMLLLKPASYGTVKLASRNAWDYPLIDPNYLSHESDIALSIMGMRLLARIARTKPFADSLDLPEDSDDKTSVFWPTDCNPDTVSDDDLEAWARLHGQSTGHPTSSARMGGSPSTSVVDSKLKVHGVEGLRVCDASCFPTQVSGHPAAVVVAVAERAADLIKGVA.

Residues 45–46 (TA), 66–67 (EA), and 123–126 (NGSM) each bind FAD. The active-site Proton acceptor is H552. Residues A585 and 596-597 (PA) each bind FAD.

It belongs to the GMC oxidoreductase family. As to quaternary structure, homodimer. FAD is required as a cofactor.

Its pathway is mycotoxin biosynthesis. Its function is as follows. Dehydrogenase; part of the gene cluster that mediates the biosynthesis of strobilurin A, an antifungal polyketide that contains a key beta-methoxyacrylate toxophore that targets the complex III of the mitochondrial electron transport chain. Strobilurin biosynthesis begins with construction of benzoyl CoA by step-wise elimination of ammonia from phenylalanine by the phenylalanine ammonia-lyase str11, oxygenation by str8 and retro-Claisen reaction to form benzoic acid, which is activated to its CoA thiolester benzoyl CoA by the dedicated CoA ligase str10. Benzoyl CoA forms the starter unit for the highly reducing polyketide synthase stpks1 that produces the polyketide prestrobilutin A. The FAD-dependent oxygenase str9 then catalyzes the key oxidative rearrangement responsible for the creation of the beta-methoxyacrylate toxophore. Str9 performs epoxidation of the 2,3 olefin of prestrobilutin A, followed by Meinwald rearrangement to furnish the aldehyde intermediate. Rapid enolization of the aldehyde intermediate would give the beta-methoxyacrylate skeleton and methylations catalyzed by str2 and str3 complete the synthesis and lead to the production of strobilurin A. The short-chain dehydrogenase stl2 and the dehydrogenase str4 play a role in the shunt pathway leading to the production of bolineol. The cluster encodes no obvious halogenase gene that could be involved in production of strobilurin B, nor any obvious dimethylallyl-transferase that could be involved in the production of strobilurin G. It is possible that unknown proteins encoded in, or near, the cluster (such as str1 or stl1) may form new classes of halogenases or dimethylally-transferases, or that the responsible genes are located elsewhere on the genome. Similarly, proteins encoded by str5/str6 hydrolases appear to have no chemical role in the biosynthesis of strobilurin A. Finally, no obvious self-resistance gene is found within the cluster. This chain is Dehydrogenase str4, found in Strobilurus tenacellus.